The chain runs to 235 residues: MAEILCTICARGGSKGVKNKNIRKINKLEMIAYSIIQAQNSKLFKHIVISTDSDEIASVAQKYGAEVFFKREAHLANDRTAKLPVMRDALLRSEEHFKTCFETLIDLDASAPLRSSLDIKKAYESFVENDNSNLITAVPARRNPYFNLVEIQNNKVVKSKEGNFTTRQSAPKCYDMNASIYIFKRDYLLENDSVFGKNTGLFVMDESTAFDIDSELDFKIVEFLISLKNLSPKDF.

Belongs to the CMP-NeuNAc synthase family.

It carries out the reaction N,N-diacetyllegionaminate + CTP = CMP-N,N-diacetyllegionaminate + diphosphate. Involved in biosynthesis of legionaminic acid (5,7-diamino-3,5,7,9-tetradeoxy-D-glycero-D-galacto-non-2-ulosonic acid)(Leg), a sialic acid-like derivative that is incorporated into flagellin via O-linkage to Ser/Thr. Catalyzes the conversion of N,N'-diacetyllegionaminic acid (Leg5Ac7Ac) and CTP into CMP-N,N'-diacetyllegionaminic acid (CMP-Leg5Ac7Ac). The sequence is that of CMP-N,N'-diacetyllegionaminic acid synthase (legF) from Campylobacter jejuni subsp. jejuni serotype O:2 (strain ATCC 700819 / NCTC 11168).